A 130-amino-acid chain; its full sequence is Small ribosomal subunit protein uS11 (130 aa).

This sequence belongs to the universal ribosomal protein uS11 family. In terms of assembly, part of the 30S ribosomal subunit. Interacts with proteins S7 and S18. Binds to IF-3.

In terms of biological role, located on the platform of the 30S subunit, it bridges several disparate RNA helices of the 16S rRNA. Forms part of the Shine-Dalgarno cleft in the 70S ribosome. The chain is Small ribosomal subunit protein uS11 from Blochmanniella floridana.